A 77-amino-acid chain; its full sequence is Thioredoxin (77 aa).

Catalysis depends on nucleophile residues Cys11 and Cys14. Cys11 and Cys14 form a disulfide bridge.

This sequence belongs to the glutaredoxin family.

Its function is as follows. Does not function as a glutathione-disulfide oxidoreductase in the presence of glutathione and glutathione reductase. Has low thioredoxin activity in vitro. The sequence is that of Thioredoxin from Methanothermobacter thermautotrophicus (strain ATCC 29096 / DSM 1053 / JCM 10044 / NBRC 100330 / Delta H) (Methanobacterium thermoautotrophicum).